Reading from the N-terminus, the 491-residue chain is Stromelysin-3 (491 aa).

Residues 1–35 (MARAACLLRAISRALLLPLPLLLLLLLLLPPQLMA) form the signal peptide. The propeptide at 36–101 (RARPPENHRH…VLNARNRQKR (66 aa)) is activation peptide. A Cysteine switch motif is present at residues 82–89 (LRCGVPDP). Residues cysteine 84, histidine 168, and aspartate 170 each coordinate Zn(2+). Ca(2+)-binding residues include aspartate 175, glycine 176, glycine 178, and isoleucine 180. Zn(2+) contacts are provided by histidine 183, histidine 196, and histidine 218. Glutamate 219 is an active-site residue. The Zn(2+) site is built by histidine 222 and histidine 228. The tract at residues 260–279 (YGRPQLTPTSPTPTLSSQAG) is disordered. Over residues 263 to 277 (PQLTPTSPTPTLSSQ) the composition is skewed to low complexity. The cysteines at positions 297 and 483 are disulfide-linked. Hemopexin repeat units follow at residues 298-342 (ETSF…WQGL), 343-385 (PSPV…KLGL), 387-435 (GSPV…WRGV), and 436-483 (PSEI…FFDC).

The protein belongs to the peptidase M10A family. The cofactor is Ca(2+). Zn(2+) serves as cofactor. In terms of processing, the precursor is cleaved by a furin endopeptidase. As to expression, highly expressed in ovary and uterus.

The protein localises to the secreted. It localises to the extracellular space. The protein resides in the extracellular matrix. Functionally, may play an important role in the progression of epithelial malignancies. The chain is Stromelysin-3 (Mmp11) from Rattus norvegicus (Rat).